Reading from the N-terminus, the 582-residue chain is Two-component response regulator ORR26 (582 aa).

A Response regulatory domain is found at 11–126 (RVLVVDDDPT…ELRNIWQHVY (116 aa)). Aspartate 62 is subject to 4-aspartylphosphate. Basic and acidic residues predominate over residues 166–182 (SDTMRKRKDVDKDHADQ). The disordered stretch occupies residues 166-187 (SDTMRKRKDVDKDHADQESSDG). Residues 189–248 (TVKKARVVWSVDLHQKFVNAVNQIGFDKVGPKKILDLMNVPGLTRENVASHLQKYRLYLS) constitute a DNA-binding region (myb-like GARP).

The protein belongs to the ARR family. Type-B subfamily. In terms of processing, two-component system major event consists of a His-to-Asp phosphorelay between a sensor histidine kinase (HK) and a response regulator (RR). In plants, the His-to-Asp phosphorelay involves an additional intermediate named Histidine-containing phosphotransfer protein (HPt). This multistep phosphorelay consists of a His-Asp-His-Asp sequential transfer of a phosphate group between first a His and an Asp of the HK protein, followed by the transfer to a conserved His of the HPt protein and finally the transfer to an Asp in the receiver domain of the RR protein.

It localises to the nucleus. Functionally, transcriptional activator that binds specific DNA sequence. Functions as a response regulator involved in His-to-Asp phosphorelay signal transduction system. Phosphorylation of the Asp residue in the receiver domain activates the ability of the protein to promote the transcription of target genes. May directly activate some type-A response regulators in response to cytokinins. In Oryza sativa subsp. japonica (Rice), this protein is Two-component response regulator ORR26.